The following is a 379-amino-acid chain: Cytochrome b (379 aa).

The next 4 helical transmembrane spans lie at 34–54 (FGSL…LLAM), 78–99 (WFIR…YLHI), 114–134 (WNTG…GYVL), and 179–199 (FFAL…VHLT). Heme b is bound by residues histidine 84 and histidine 98. 2 residues coordinate heme b: histidine 183 and histidine 197. Histidine 202 serves as a coordination point for a ubiquinone. 4 helical membrane-spanning segments follow: residues 227–247 (LKDI…AFFS), 289–309 (LGGV…PLLH), 321–341 (LSQL…WIGS), and 348–368 (FIII…VLFP).

It belongs to the cytochrome b family. In terms of assembly, the cytochrome bc1 complex contains 11 subunits: 3 respiratory subunits (MT-CYB, CYC1 and UQCRFS1), 2 core proteins (UQCRC1 and UQCRC2) and 6 low-molecular weight proteins (UQCRH/QCR6, UQCRB/QCR7, UQCRQ/QCR8, UQCR10/QCR9, UQCR11/QCR10 and a cleavage product of UQCRFS1). This cytochrome bc1 complex then forms a dimer. Heme b is required as a cofactor.

Its subcellular location is the mitochondrion inner membrane. Component of the ubiquinol-cytochrome c reductase complex (complex III or cytochrome b-c1 complex) that is part of the mitochondrial respiratory chain. The b-c1 complex mediates electron transfer from ubiquinol to cytochrome c. Contributes to the generation of a proton gradient across the mitochondrial membrane that is then used for ATP synthesis. In Struthio camelus (Common ostrich), this protein is Cytochrome b (MT-CYB).